A 292-amino-acid polypeptide reads, in one-letter code: Seed lectin (292 aa).

Residues 1–37 form the signal peptide; it reads MATSNSRPHLLQTHKPFSVVLAISITFFLLLLNKVNS. N-linked (GlcNAc...) asparagine glycosylation is found at asparagine 82 and asparagine 154. Residues aspartate 163 and aspartate 165 each coordinate Mn(2+). Ca(2+) is bound by residues aspartate 165, histidine 167, asparagine 169, and aspartate 172. Residues aspartate 172 and histidine 177 each coordinate Mn(2+). Asparagine 186 carries an N-linked (GlcNAc...) asparagine glycan.

It belongs to the leguminous lectin family.

Functionally, mannose/glucose-specific lectin. This is Seed lectin from Styphnolobium japonicum (Japanese pagoda tree).